We begin with the raw amino-acid sequence, 77 residues long: Sec-independent protein translocase protein TatA (77 aa).

Residues 1–21 (MGGLSIWHWLIVLLIVALVFG) traverse the membrane as a helical segment. Residues 40-77 (KDGMREGEAPADPQQLPRSGSVNVDAKDATRSSDSNKA) are disordered. Positions 64-77 (DAKDATRSSDSNKA) are enriched in basic and acidic residues.

It belongs to the TatA/E family. As to quaternary structure, the Tat system comprises two distinct complexes: a TatABC complex, containing multiple copies of TatA, TatB and TatC subunits, and a separate TatA complex, containing only TatA subunits. Substrates initially bind to the TatABC complex, which probably triggers association of the separate TatA complex to form the active translocon.

It localises to the cell inner membrane. Its function is as follows. Part of the twin-arginine translocation (Tat) system that transports large folded proteins containing a characteristic twin-arginine motif in their signal peptide across membranes. TatA could form the protein-conducting channel of the Tat system. The polypeptide is Sec-independent protein translocase protein TatA (Burkholderia thailandensis (strain ATCC 700388 / DSM 13276 / CCUG 48851 / CIP 106301 / E264)).